We begin with the raw amino-acid sequence, 387 residues long: Galactokinase (387 aa).

Position 33–36 (33–36 (EHID)) interacts with substrate. ATP contacts are provided by residues Ser-67 and 124-130 (GAGLSSS). Mg(2+) is bound by residues Ser-130 and Glu-162. Asp-174 acts as the Proton acceptor in catalysis. Tyr-224 lines the substrate pocket.

The protein belongs to the GHMP kinase family. GalK subfamily.

The protein resides in the cytoplasm. The enzyme catalyses alpha-D-galactose + ATP = alpha-D-galactose 1-phosphate + ADP + H(+). It participates in carbohydrate metabolism; galactose metabolism. Its function is as follows. Catalyzes the transfer of the gamma-phosphate of ATP to D-galactose to form alpha-D-galactose-1-phosphate (Gal-1-P). This Clostridium perfringens (strain ATCC 13124 / DSM 756 / JCM 1290 / NCIMB 6125 / NCTC 8237 / Type A) protein is Galactokinase.